Reading from the N-terminus, the 258-residue chain is Tryptophan synthase alpha chain (258 aa).

Catalysis depends on proton acceptor residues E44 and D55.

Belongs to the TrpA family. In terms of assembly, tetramer of two alpha and two beta chains.

It catalyses the reaction (1S,2R)-1-C-(indol-3-yl)glycerol 3-phosphate + L-serine = D-glyceraldehyde 3-phosphate + L-tryptophan + H2O. It participates in amino-acid biosynthesis; L-tryptophan biosynthesis; L-tryptophan from chorismate: step 5/5. The alpha subunit is responsible for the aldol cleavage of indoleglycerol phosphate to indole and glyceraldehyde 3-phosphate. The sequence is that of Tryptophan synthase alpha chain from Petrotoga mobilis (strain DSM 10674 / SJ95).